A 345-amino-acid polypeptide reads, in one-letter code: tRNA N6-adenosine threonylcarbamoyltransferase (345 aa).

2 residues coordinate Fe cation: H113 and H117. Substrate-binding positions include 142 to 146 (AISGG), D175, G188, D192, and N282. D310 contacts Fe cation.

It belongs to the KAE1 / TsaD family. It depends on Fe(2+) as a cofactor.

The protein localises to the cytoplasm. The catalysed reaction is L-threonylcarbamoyladenylate + adenosine(37) in tRNA = N(6)-L-threonylcarbamoyladenosine(37) in tRNA + AMP + H(+). Its function is as follows. Required for the formation of a threonylcarbamoyl group on adenosine at position 37 (t(6)A37) in tRNAs that read codons beginning with adenine. Is involved in the transfer of the threonylcarbamoyl moiety of threonylcarbamoyl-AMP (TC-AMP) to the N6 group of A37, together with TsaE and TsaB. TsaD likely plays a direct catalytic role in this reaction. This chain is tRNA N6-adenosine threonylcarbamoyltransferase, found in Bdellovibrio bacteriovorus (strain ATCC 15356 / DSM 50701 / NCIMB 9529 / HD100).